Here is a 174-residue protein sequence, read N- to C-terminus: F-box protein At1g70360 (174 aa).

Positions 136–174 (PPCFISLPRELKHKILESLPGVDIGTLACVSSELRDMAS) constitute an F-box domain.

The chain is F-box protein At1g70360 from Arabidopsis thaliana (Mouse-ear cress).